A 252-amino-acid polypeptide reads, in one-letter code: Ureidoacrylate amidohydrolase RutB (252 aa).

Residues 1-14 (MSTPARNTTLTSNT) show a composition bias toward polar residues. The disordered stretch occupies residues 1–31 (MSTPARNTTLTSNTPAGAPRLPGAPAPQVLP). Residues 15–27 (PAGAPRLPGAPAP) are compositionally biased toward low complexity. D50 functions as the Proton acceptor in the catalytic mechanism. Residue K159 is part of the active site. The active-site Nucleophile is the C192.

This sequence belongs to the isochorismatase family. RutB subfamily.

The catalysed reaction is (Z)-3-ureidoacrylate + H2O + H(+) = (Z)-3-aminoacrylate + NH4(+) + CO2. It carries out the reaction (Z)-3-ureidoacrylate + H2O = (Z)-3-aminoacrylate + carbamate + H(+). It catalyses the reaction (Z)-2-methylureidoacrylate + H2O + H(+) = (Z)-2-methylaminoacrylate + NH4(+) + CO2. Functionally, hydrolyzes ureidoacrylate to form aminoacrylate and carbamate. The carbamate hydrolyzes spontaneously, thereby releasing one of the nitrogen atoms of the pyrimidine ring as ammonia and one of its carbon atoms as CO2. In Variovorax paradoxus (strain S110), this protein is Ureidoacrylate amidohydrolase RutB.